Here is a 602-residue protein sequence, read N- to C-terminus: MANKKRNVRNFSIIAHIDHGKSTLADRILENTKTVTKREMKDQLLDGMDLERERGITIKLNAVQLAYTSNKGEDFIFHLIDTPGHVDFTYEVSRSLAACEGAILVVDAAQGIEAQTLANVYLAMENDLEIIPVINKIDLPSADTEKVKKELEDVLGIDGDDVILASAKANIGIEEILERITEVVPEPAGDGEAPLKALIFDSLYDSYRGVIAYVCVKEGSIKVGDKIQMMATGKEFEVNEVGVFTPKTVVKKELHVGDVGYLTASIKNVGDSRVGDTITHANRKANEALPGYRRLNPMVFCGMYPVDTNDYNDLREALERLELNDSSLQYEPETSQALGFGYRCGFLGLLHMEIIQERIEREFGINLITTAPSVIFEVEKTDGEVLNIDNPSEMPDPQVVEQIREPYVEATIMVPNEYVGPVMEISQKKRGNFIDMQYLDDIRVNVVYHIPLSEIVFDFFDQLKSNTKGYASFDYELIGYQQSNLVKMDILLNGDTIDALSFVVHRDFAYERGKQIVEKLKELIPRQQFEVPVQAAIGNKIVARSNIKAVRKDVTAKLYGGDITRKRKLLEKQKEGKKRMKMVGSVEVPQEAFMAVLKMDDN.

A tr-type G domain is found at arginine 6–alanine 188. GTP contacts are provided by residues aspartate 18–threonine 23 and asparagine 135–aspartate 138.

This sequence belongs to the TRAFAC class translation factor GTPase superfamily. Classic translation factor GTPase family. LepA subfamily.

It is found in the cell membrane. It carries out the reaction GTP + H2O = GDP + phosphate + H(+). Required for accurate and efficient protein synthesis under certain stress conditions. May act as a fidelity factor of the translation reaction, by catalyzing a one-codon backward translocation of tRNAs on improperly translocated ribosomes. Back-translocation proceeds from a post-translocation (POST) complex to a pre-translocation (PRE) complex, thus giving elongation factor G a second chance to translocate the tRNAs correctly. Binds to ribosomes in a GTP-dependent manner. This is Elongation factor 4 from Oceanobacillus iheyensis (strain DSM 14371 / CIP 107618 / JCM 11309 / KCTC 3954 / HTE831).